Consider the following 519-residue polypeptide: Maturase K (519 aa).

Belongs to the intron maturase 2 family. MatK subfamily.

It localises to the plastid. It is found in the chloroplast. Its function is as follows. Usually encoded in the trnK tRNA gene intron. Probably assists in splicing its own and other chloroplast group II introns. This Keteleeria davidiana (David's keteleeria) protein is Maturase K.